We begin with the raw amino-acid sequence, 351 residues long: V-type proton ATPase subunit d2 (351 aa).

This sequence belongs to the V-ATPase V0D/AC39 subunit family. V-ATPase is a heteromultimeric enzyme composed of a peripheral catalytic V1 complex (components A to H) attached to an integral membrane V0 proton pore complex (components: a, c, c'', d and e).

It is found in the vacuole membrane. In terms of biological role, subunit of the integral membrane V0 complex of vacuolar ATPase. Vacuolar ATPase is responsible for acidifying a variety of intracellular compartments in eukaryotic cells, thus providing most of the energy required for transport processes in the vacuolar system. This is V-type proton ATPase subunit d2 (VHA-d2) from Arabidopsis thaliana (Mouse-ear cress).